We begin with the raw amino-acid sequence, 927 residues long: DNA mismatch repair protein MutS (927 aa).

The interval 44–80 (DESLKRPRNRHKPTSVPSIPLDSESQEQLETADNDND) is disordered. Residues 67-79 (ESQEQLETADNDN) are compositionally biased toward acidic residues. Residue 725 to 732 (GPNASGKS) participates in ATP binding.

Belongs to the DNA mismatch repair MutS family.

This protein is involved in the repair of mismatches in DNA. It is possible that it carries out the mismatch recognition step. This protein has a weak ATPase activity. The sequence is that of DNA mismatch repair protein MutS from Prochlorococcus marinus (strain MIT 9303).